The primary structure comprises 307 residues: Ornithine carbamoyltransferase (307 aa).

Carbamoyl phosphate contacts are provided by residues 50-53 (STRT), glutamine 77, arginine 101, and 128-131 (HPCQ). Residues asparagine 160, aspartate 224, and 228-229 (SM) each bind L-ornithine. Carbamoyl phosphate-binding positions include 264–265 (CL) and arginine 292.

It belongs to the aspartate/ornithine carbamoyltransferase superfamily. OTCase family.

It localises to the cytoplasm. It catalyses the reaction carbamoyl phosphate + L-ornithine = L-citrulline + phosphate + H(+). Its pathway is amino-acid biosynthesis; L-arginine biosynthesis; L-arginine from L-ornithine and carbamoyl phosphate: step 1/3. Its function is as follows. Reversibly catalyzes the transfer of the carbamoyl group from carbamoyl phosphate (CP) to the N(epsilon) atom of ornithine (ORN) to produce L-citrulline. This Clavibacter michiganensis subsp. michiganensis (strain NCPPB 382) protein is Ornithine carbamoyltransferase.